The primary structure comprises 354 residues: Probable trehalose-phosphate phosphatase E (354 aa).

This sequence belongs to the trehalose phosphatase family. It depends on a divalent metal cation as a cofactor.

It catalyses the reaction alpha,alpha-trehalose 6-phosphate + H2O = alpha,alpha-trehalose + phosphate. Its pathway is glycan biosynthesis; trehalose biosynthesis. Removes the phosphate from trehalose 6-phosphate to produce free trehalose. Trehalose accumulation in plant may improve abiotic stress tolerance. This chain is Probable trehalose-phosphate phosphatase E (TPPE), found in Arabidopsis thaliana (Mouse-ear cress).